A 131-amino-acid chain; its full sequence is MIYGIGTDIIHIPRIEQLINKYSTKFINRILGKNEITIYQSLSIKQQTNFVAKRFAGKESVAKAIGTGITSSLLLRDIEILNNNLGKPIVYIPNAAKILLNNIKLTEYKIDISLSDDYPLAIAFTVISASI.

2 residues coordinate Mg(2+): aspartate 8 and glutamate 59.

The protein belongs to the P-Pant transferase superfamily. AcpS family. It depends on Mg(2+) as a cofactor.

It localises to the cytoplasm. The catalysed reaction is apo-[ACP] + CoA = holo-[ACP] + adenosine 3',5'-bisphosphate + H(+). Transfers the 4'-phosphopantetheine moiety from coenzyme A to a Ser of acyl-carrier-protein. The chain is Holo-[acyl-carrier-protein] synthase from Orientia tsutsugamushi (strain Ikeda) (Rickettsia tsutsugamushi).